Reading from the N-terminus, the 138-residue chain is Gamma-glutamylaminecyclotransferase (138 aa).

Glutamate 63 acts as the Proton acceptor in catalysis.

This sequence belongs to the gamma-glutamylcyclotransferase family.

It carries out the reaction epsilon-(gamma-L-glutamyl)-L-lysine = 5-oxo-L-proline + L-lysine. Its function is as follows. May contribute to degradation of proteins cross-linked by transglutaminases by degrading the cross-link between a lysine and a glutamic acid residue. Catalyzes the formation of 5-oxo-L-proline from L-gamma-glutamyl-L-epsilon-lysine. The protein is Gamma-glutamylaminecyclotransferase (ggact) of Xenopus laevis (African clawed frog).